A 196-amino-acid polypeptide reads, in one-letter code: DnaA initiator-associating protein DiaA (196 aa).

The 163-residue stretch at 34–196 folds into the SIS domain; it reads LVQSLLNGNK…DNTLFPHQDD (163 aa).

It belongs to the SIS family. DiaA subfamily. As to quaternary structure, homotetramer; dimer of dimers.

Functionally, required for the timely initiation of chromosomal replication via direct interactions with the DnaA initiator protein. The sequence is that of DnaA initiator-associating protein DiaA from Shigella boydii serotype 18 (strain CDC 3083-94 / BS512).